The primary structure comprises 977 residues: Receptor protein-tyrosine kinase CEPR2 (977 aa).

The first 31 residues, 1-31 (MSRRPDLLRGSVVATVAATFLLFIFPPNVES), serve as a signal peptide directing secretion. Topologically, residues 32–620 (TVEKQALFRF…NVKRNSSLDG (589 aa)) are extracellular. N-linked (GlcNAc...) asparagine glycosylation is present at N85. 20 LRR repeats span residues 97 to 121 (LTKL…IVNC), 122 to 146 (KNLK…PLKS), 148 to 167 (EILD…WIGN), 168 to 192 (MNQL…SIGG), 193 to 217 (LKKL…IFDL), 219 to 241 (ALDT…ISRL), 242 to 265 (VNLT…IKNL), 266 to 288 (TRLR…ELGV), 290 to 312 (KELR…GFGD), 313 to 338 (LSHL…GRFS), 340 to 361 (LDTV…LCQN), 363 to 385 (KLQF…YGEC), 386 to 409 (KSLL…FWSL), 411 to 433 (LAKM…IGLS), 434 to 457 (TELS…LGRL), 458 to 481 (TNIE…VGDL), 482 to 504 (KELS…ELKN), 506 to 529 (VKLV…LSQI), 530 to 553 (ASLN…LVKL), and 555 to 576 (LSFI…LLAV). N128 carries N-linked (GlcNAc...) asparagine glycosylation. An N-linked (GlcNAc...) asparagine glycan is attached at N205. N-linked (GlcNAc...) asparagine glycosylation is found at N243, N251, and N264. N-linked (GlcNAc...) asparagine glycosylation is found at N301 and N325. 2 N-linked (GlcNAc...) asparagine glycosylation sites follow: N469 and N491. N615 carries an N-linked (GlcNAc...) asparagine glycan. A helical membrane pass occupies residues 621 to 641 (TLLFLALAIVVVVLVSGLFAL). Residues 642-977 (RYRVVKIREL…SQDTTGKITV (336 aa)) lie on the Cytoplasmic side of the membrane. The 283-residue stretch at 683 to 965 (LDEDHVIGSG…RKLDDADPCV (283 aa)) folds into the Protein kinase domain. Residues 689–697 (IGSGSAGKV) and K712 contribute to the ATP site. Phosphotyrosine is present on Y801. Residue D814 is the Proton acceptor of the active site. Position 846 is a phosphoserine (S846). Y854 and Y861 each carry phosphotyrosine.

This sequence belongs to the protein kinase superfamily. Ser/Thr protein kinase family. In terms of assembly, interacts with the root-derived peptide CEP1. Binds to the ammonium transporter AMT1-1. Expressed in mature leaves, primary roots, and the root tips of both primary and lateral roots.

It localises to the cell membrane. The enzyme catalyses L-tyrosyl-[protein] + ATP = O-phospho-L-tyrosyl-[protein] + ADP + H(+). In terms of biological role, receptor kinase involved in the perception of C-terminally encoded plant signaling peptide (CEP) and subsequent regulation of root and shoot development. Together with CEPR1, mediates systemic nitrogen (N)-demand signaling upon the perception of root-derived peptides (e.g. CEP1) via the up-regulation of genes involved in N uptake and assimilation pathways. This Arabidopsis thaliana (Mouse-ear cress) protein is Receptor protein-tyrosine kinase CEPR2.